A 180-amino-acid chain; its full sequence is MIIYLHGFDSNSPGNHEKVLQLQFIDSDVRLISYSTRHPKHDMQHLLKEVDKMLQLNVDDRPLICGVGLGGYWAERIGFLCDIRQVVFNPNLFPYENMEGKIDRPEEYADIATKCVTNFREKNRDRCLVILSRHDEALDSHRSAKELHHFYEIVWDEEQTHKFKNISPHLQRIKAFKTLG.

This sequence belongs to the UPF0227 family.

This chain is UPF0227 protein CKO_01948, found in Citrobacter koseri (strain ATCC BAA-895 / CDC 4225-83 / SGSC4696).